Here is a 473-residue protein sequence, read N- to C-terminus: M-phase inducer phosphatase 3 (473 aa).

Positions 1–23 (MSTELFSSTREEGSSGSGPSFRS) are disordered. Serine 2 bears the N-acetylserine mark. Serine 20 and serine 38 each carry phosphoserine. The residue at position 48 (threonine 48) is a Phosphothreonine. Phosphoserine is present on residues serine 57, serine 61, and serine 64. Threonine 67 bears the Phosphothreonine mark. Phosphoserine; by CDK1 is present on serine 122. The residue at position 129 (serine 129) is a Phosphoserine. At threonine 130 the chain carries Phosphothreonine. Residues 132-158 (NGLDRGHRKRDAMCSSSANKENDNGNL) are disordered. Residues 145–158 (CSSSANKENDNGNL) are compositionally biased toward polar residues. Residue serine 168 is modified to Phosphoserine. 2 positions are modified to phosphoserine; by PLK3: serine 191 and serine 198. Serine 214 bears the Phosphoserine; by CDK1 mark. Phosphoserine; by CHEK1, CHEK2, BRSK1, MAPK14 AND MARK3 is present on serine 216. Residues 321 to 428 (LIEKFYVIDC…FFPEYMELCE (108 aa)) enclose the Rhodanese domain. The interval 334–379 (YEYLGGHIQGALNLYSQEELFNFFLKKPIVPLDTQKRIIIVFHCEF) is HIV-1 Vpr binding site. The active site involves cysteine 377. At serine 472 the chain carries Phosphoserine.

Belongs to the MPI phosphatase family. Interacts with MAPK14 and 14-3-3 proteins. When phosphorylated on Ser-129 and/or Thr-130, interacts with PLK1. Interacts with MARK3/C-TAK1. As to quaternary structure, (Microbial infection) Interacts with HIV-1 Vpr; this interaction inactivates CDC25C phosphatase activity. Post-translationally, phosphorylated by CHEK1 and MAPK14 at Ser-216. This phosphorylation creates a binding site for 14-3-3 protein and inhibits the phosphatase. Phosphorylated by PLK4. Phosphorylated by PLK1, leading to activate the phosphatase activity. Phosphorylation by PLK3 at Ser-191 promotes nuclear translocation. Ser-198 is a minor phosphorylation site. Was initially reported to be phosphorylated by PLK3 at Ser-216. However, such phosphorylation by PLK3 was not confirmed by other groups. Phosphorylation at Thr-48, Thr-67, Ser-122, Thr-130, Ser-168 and Ser-214 occurs at G2 and G2-M transition and is probably catalyzed by CDK1. Ser-168 phosphorylation levels are lower than those at the other 5 CDK1 sites. Phosphorylation by CDK1 leads to increased activity.

Its subcellular location is the nucleus. The enzyme catalyses O-phospho-L-tyrosyl-[protein] + H2O = L-tyrosyl-[protein] + phosphate. Functionally, functions as a dosage-dependent inducer in mitotic control. Tyrosine protein phosphatase required for progression of the cell cycle. When phosphorylated, highly effective in activating G2 cells into prophase. Directly dephosphorylates CDK1 and activates its kinase activity. This Homo sapiens (Human) protein is M-phase inducer phosphatase 3 (CDC25C).